The primary structure comprises 284 residues: MSLVVFTALVGLLVAPVTVHPMIALTGILFIALGAGASGALNMWSHEDIDRVMKRTRNRPVPSGTVAPGEALGIGLALSGIAVVMLGLATNLFAAGLLAFTIFFYAVVYSMWLKRTTPQNIVIGGAAGAFPPMIGWAVATGGVSVESLFMFALIFMWTPPHFWSLALFMKSDYSDAGVPMLTVTHGRRVTRAHVLVYSLLLAPLAVAGAFTGTGGPLYLATALALNGWLLVGAVRTWRRDEAQAEADRYRVEKAFFRFSLYYLFLHFGAILAEAALKPYGLGGW.

The next 9 membrane-spanning stretches (helical) occupy residues 2–19, 23–45, 69–89, 92–112, 121–141, 148–168, 194–214, 217–237, and 263–283; these read SLVV…PVTV, IALT…NMWS, GEAL…LGLA, LFAA…YSMW, IVIG…VATG, LFMF…LALF, VLVY…TGTG, LYLA…VRTW, and LFLH…GLGG.

This sequence belongs to the UbiA prenyltransferase family. Protoheme IX farnesyltransferase subfamily. In terms of assembly, interacts with CtaA.

The protein resides in the cell inner membrane. It carries out the reaction heme b + (2E,6E)-farnesyl diphosphate + H2O = Fe(II)-heme o + diphosphate. It functions in the pathway porphyrin-containing compound metabolism; heme O biosynthesis; heme O from protoheme: step 1/1. In terms of biological role, converts heme B (protoheme IX) to heme O by substitution of the vinyl group on carbon 2 of heme B porphyrin ring with a hydroxyethyl farnesyl side group. In Cereibacter sphaeroides (Rhodobacter sphaeroides), this protein is Protoheme IX farnesyltransferase.